A 713-amino-acid polypeptide reads, in one-letter code: Metal transporter CNNM3 (713 aa).

Residues 7-29 traverse the membrane as a helical segment; that stretch reads AVVGWLGWVLAAFCLGSTAGEAA. The N-linked (GlcNAc...) asparagine glycan is linked to Asn73. One can recognise a CNNM transmembrane domain in the interval 136-314; sequence EAAPPWALGL…DPYSDLSKGV (179 aa). Helical transmembrane passes span 137–157, 199–219, 227–247, and 267–287; these read AAPP…AAVA, CALG…AVLL, AVPA…VLPA, and LAVL…ELAA. CBS domains are found at residues 324–385 and 392–458; these read LTPL…CTPL and YNHP…ILDE. Residues 664-713 are disordered; it reads LPPSPENAELQAIPGSQTRLLGDKSRETAGSTNSRPSIPVEESPGRNPGV. Residues Ser667 and Ser706 each carry the phosphoserine modification.

Belongs to the ACDP family. As to expression, widely expressed with highest levels in brain, kidney, liver, lung and heart.

It is found in the cell membrane. In terms of biological role, probable metal transporter. The polypeptide is Metal transporter CNNM3 (Cnnm3) (Mus musculus (Mouse)).